We begin with the raw amino-acid sequence, 436 residues long: C4-dicarboxylate transport protein 2 (436 aa).

The next 9 membrane-spanning stretches (helical) occupy residues 14–34, 45–65, 77–97, 142–162, 198–218, 223–243, 290–310, 331–351, and 353–373; these read VLVAIAIGIALGHWYPETAVA, LIKMAIAPIIFCTVVTGIAGM, MALLYFEVVSTVALIIGLVVV, VVGAFANGDILQVLFFSVLFG, PIGAFGAMAFTIGAYGVGSLV, LMLCFYITCILFVLIVLGGIA, VVGLVIPTGYSFNLDGTSIYL, ITLLLVLLIASKGAAGVTGSG, and IVLAATLSAVGHLPVAGLALI. Positions 414-436 are disordered; sequence ELAGEGNASSPASDIPVGGREAV.

It belongs to the dicarboxylate/amino acid:cation symporter (DAACS) (TC 2.A.23) family.

It is found in the cell inner membrane. In terms of biological role, responsible for the transport of dicarboxylates such as succinate, fumarate, and malate from the periplasm across the membrane. The protein is C4-dicarboxylate transport protein 2 of Pseudomonas aeruginosa (strain UCBPP-PA14).